The primary structure comprises 91 residues: Small ribosomal subunit protein uS19 (91 aa).

Belongs to the universal ribosomal protein uS19 family.

Its function is as follows. Protein S19 forms a complex with S13 that binds strongly to the 16S ribosomal RNA. This chain is Small ribosomal subunit protein uS19, found in Opitutus terrae (strain DSM 11246 / JCM 15787 / PB90-1).